Reading from the N-terminus, the 157-residue chain is Endoribonuclease YbeY (157 aa).

Zn(2+)-binding residues include His-121, His-125, and His-131.

It belongs to the endoribonuclease YbeY family. The cofactor is Zn(2+).

It is found in the cytoplasm. Functionally, single strand-specific metallo-endoribonuclease involved in late-stage 70S ribosome quality control and in maturation of the 3' terminus of the 16S rRNA. The chain is Endoribonuclease YbeY from Salinispora tropica (strain ATCC BAA-916 / DSM 44818 / JCM 13857 / NBRC 105044 / CNB-440).